The chain runs to 473 residues: Photosystem II CP43 reaction center protein (473 aa).

A propeptide spanning residues 1-14 (MKTLYSLRRFYPVE) is cleaved from the precursor. Position 15 is an N-acetylthreonine (T15). Residue T15 is modified to Phosphothreonine. Helical transmembrane passes span 69–93 (LFEV…PHLA), 134–155 (LIGP…KDKN), 178–200 (KALY…RKIT), 255–275 (KPFA…LSYS), and 291–312 (WFNN…ASQA). E367 provides a ligand contact to [CaMn4O5] cluster. Residues 447–471 (RARAAAAGFEKGIDRDTEPVLSMTP) form a helical membrane-spanning segment.

The protein belongs to the PsbB/PsbC family. PsbC subfamily. PSII is composed of 1 copy each of membrane proteins PsbA, PsbB, PsbC, PsbD, PsbE, PsbF, PsbH, PsbI, PsbJ, PsbK, PsbL, PsbM, PsbT, PsbX, PsbY, PsbZ, Psb30/Ycf12, at least 3 peripheral proteins of the oxygen-evolving complex and a large number of cofactors. It forms dimeric complexes. Binds multiple chlorophylls and provides some of the ligands for the Ca-4Mn-5O cluster of the oxygen-evolving complex. It may also provide a ligand for a Cl- that is required for oxygen evolution. PSII binds additional chlorophylls, carotenoids and specific lipids. is required as a cofactor.

It is found in the plastid. It localises to the chloroplast thylakoid membrane. Functionally, one of the components of the core complex of photosystem II (PSII). It binds chlorophyll and helps catalyze the primary light-induced photochemical processes of PSII. PSII is a light-driven water:plastoquinone oxidoreductase, using light energy to abstract electrons from H(2)O, generating O(2) and a proton gradient subsequently used for ATP formation. The sequence is that of Photosystem II CP43 reaction center protein from Angiopteris evecta (Mule's foot fern).